The sequence spans 431 residues: Reverse prenyltransferase criA (431 aa).

8 residues coordinate dimethylallyl diphosphate: arginine 104, lysine 193, tyrosine 195, lysine 262, tyrosine 264, tyrosine 347, tyrosine 412, and tyrosine 416.

This sequence belongs to the tryptophan dimethylallyltransferase family. In terms of assembly, monomer.

The catalysed reaction is cyclo(L-tryptophyl-L-alanyl) + dimethylallyl diphosphate = preechinulin + diphosphate. It participates in secondary metabolite biosynthesis. Its pathway is alkaloid biosynthesis. Its function is as follows. Reverse prenyltransferase; part of the gene cluster that mediates the biosynthesis of echinulin family alkaloid. The pathway begins with the biosynthesis of the cyclic dipeptide cyclo-L-Trp-L-Ala (cyclo-TA) by the NRPS criC via condensation of L-alanine and L-tryptophan. The prenyltransferase criA then catalyzes the first prenylation step, a reverse prenylation reaction at C2, to yield preechinulin. Preechinulin is the substrate of the cytochrome P450 monooxygenase criE that catalyzes the formation of the double bond between C10 and C11 to produce neoechulin A. The unique prenyltransferase criF functions as a competitive enzyme with criE for preechinulin metabolization and uses preechinulin for effective regiospecific prenylations. Preechinulin is prenylated by criF at C5 or C7. C7-prenylation leads to accumulation of tardioxopiperazine B without further modification by criF. In contrast, the C5-prenylated tardioxopiperazine A can be prenylated again by criF, predominantly at C7 to form echinulin or less frequently at C4 to give variecolorin L. CriF also accepts neoechilunin A to produce varlecolorin G (prenylation at C5) or isoechinulin A (prenylation at C7). CriF further converts isoechinulin A into dehydroechinulin. Moreover, a yet unidentified enzyme can also convert neoechilunin A into neoechilunin B by introducing a double bond between positions C14 and C17 and thus provides a further substrate to criF for C5 and C7 prenylation. The chain is Reverse prenyltransferase criA from Aspergillus cristatus (Chinese Fuzhuan brick tea-fermentation fungus).